A 1190-amino-acid chain; its full sequence is Plakophilin-4 (1190 aa).

Residues 1–32 form a disordered region; that stretch reads MPAPEQGSLVEEGQPQTHQEAVSTGPGMEPET. Residues 36-63 adopt a coiled-coil conformation; sequence TILASVKEQELQFQRLTRELEVERQIVA. Residues 73 to 347 are disordered; it reads AESPSIASTS…KRSGMTAVPQ (275 aa). Position 75 is a phosphoserine (serine 75). A compositionally biased stretch (polar residues) spans 77–86; that stretch reads SIASTSSTEK. Threonine 84 is subject to Phosphothreonine. Residues serine 106, serine 132, serine 136, and serine 139 each carry the phosphoserine modification. Polar residues-rich tracts occupy residues 138–156, 163–203, and 213–229; these read GSLG…SDSG, FHNS…QPSV, and SVPS…STGV. Serine 220, serine 230, and serine 235 each carry phosphoserine. Over residues 230–241 the composition is skewed to low complexity; sequence SPSRGSLRTSLG. Residues 247 to 266 are compositionally biased toward polar residues; it reads PSVTDSRPLNPSAYSSSTLP. 2 positions are modified to omega-N-methylarginine: arginine 253 and arginine 269. Residues serine 272, serine 280, serine 313, serine 326, and serine 336 each carry the phosphoserine modification. Over residues 289-323 the composition is skewed to polar residues; that stretch reads SVTSRQTSNPNGPVPQYQTTTRVGSPLTLTDAQTR. Over residues 324–337 the composition is skewed to low complexity; it reads VASPSQGQVGSSSP. At tyrosine 371 the chain carries Phosphotyrosine. 3 positions are modified to phosphoserine: serine 391, serine 402, and serine 405. At threonine 411 the chain carries Phosphothreonine. Phosphotyrosine is present on tyrosine 414. Serine 421, serine 426, and serine 437 each carry phosphoserine. Tyrosine 477 is subject to Phosphotyrosine. Serine 509, serine 511, and serine 514 each carry phosphoserine. ARM repeat units lie at residues 517–556, 559–598, and 603–643; these read KDPR…HLCF, NKVK…NLVF, and DENK…NLSS. Basic and acidic residues predominate over residues 772 to 781; that stretch reads GKESPSKDSE. Positions 772-809 are disordered; the sequence is GKESPSKDSEPSCWGKKKKKKKRTPQEDQWDGVGPIPG. Residue serine 775 is modified to Phosphoserine. The ARM 4 repeat unit spans residues 861–900; it reads AYIRAAVRKEKGLPILVELLRMDNDRVVSSVATALRNMAL. 2 positions are modified to phosphothreonine: threonine 1012 and threonine 1016. A phosphoserine mark is found at serine 1044, serine 1090, serine 1099, and serine 1133.

This sequence belongs to the beta-catenin family. Interacts (via the C-terminus) with FRMPD2 (via the PDZ 2 domain). Interacts with PDZD2. Interacts with RHOA; the interaction is detected at the midbody. Interacts with ECT2; the interaction is detected at the midbody. Interacts with CCDC85B.

It is found in the cell junction. Its subcellular location is the desmosome. The protein localises to the cytoplasm. The protein resides in the cytoskeleton. It localises to the spindle. It is found in the spindle pole. Its subcellular location is the midbody. The protein localises to the cell membrane. Functionally, plays a role as a regulator of Rho activity during cytokinesis. May play a role in junctional plaques. The polypeptide is Plakophilin-4 (Pkp4) (Mus musculus (Mouse)).